A 1572-amino-acid polypeptide reads, in one-letter code: E3 ubiquitin-protein ligase HECW2 (1572 aa).

Residue S48 is modified to Phosphoserine. Positions 167 to 301 (GAEGMEGGAS…QAIGDQMLSY (135 aa)) constitute a C2 domain. Disordered stretches follow at residues 341–452 (VNSV…SSFP) and 489–796 (IMFS…PSVR). Low complexity predominate over residues 400–410 (TSTSSRTSPPR). Residues 518-532 (ASTHEAASFEDKPEN) show a composition bias toward basic and acidic residues. Composition is skewed to polar residues over residues 572-588 (EVDQ…SDAS), 597-614 (ETES…SSET), 643-664 (SSCN…SSLE), and 688-703 (PTSS…SVCT). The interval 737–1068 (WQRRGSLEGA…PRPSSTFNTV (332 aa)) is interaction with TP73. Low complexity predominate over residues 744 to 776 (EGAAAAAESPPQEEGSAGEAQGTCEGATAQEEG). The 34-residue stretch at 807–840 (EALPPNWEARIDSHGRIFYVDHVNRTTTWQRPTA) folds into the WW 1 domain. The stretch at 847–874 (LQRSNSIQQMEQLNRRYQSIRRTMTNER) forms a coiled coil. Residues S852 and S909 each carry the phosphoserine modification. Residues 985–1018 (LELPRGWEMKHDHQGKAFFVDHNSRTTTFIDPRL) form the WW 2 domain. Disordered stretches follow at residues 1024–1069 (RPTS…NTVS) and 1161–1187 (CQSP…RAPA). Residues 1031-1040 (HRQHLTRQRS) are compositionally biased toward basic residues. Over residues 1161-1181 (CQSPRGSPVSSPQNSPGTQRA) the composition is skewed to polar residues. At S1175 the chain carries Phosphoserine. Residues 1237 to 1572 (SRKDLQRNKL…VEETSTFGLE (336 aa)) form the HECT domain. C1540 (glycyl thioester intermediate) is an active-site residue.

Interacts with TP73. Interacts with FZR1. Post-translationally, ubiquitinated and degraded during mitotic exit by APC/C-Cdh1. Predominantly expressed in adult brain, lung and heart.

It is found in the cytoplasm. The protein localises to the cytoskeleton. It localises to the spindle. The enzyme catalyses S-ubiquitinyl-[E2 ubiquitin-conjugating enzyme]-L-cysteine + [acceptor protein]-L-lysine = [E2 ubiquitin-conjugating enzyme]-L-cysteine + N(6)-ubiquitinyl-[acceptor protein]-L-lysine.. Its pathway is protein modification; protein ubiquitination. In terms of biological role, E3 ubiquitin-protein ligase that mediates ubiquitination of TP73. Acts to stabilize TP73 and enhance activation of transcription by TP73. Involved in the regulation of mitotic metaphase/anaphase transition. The protein is E3 ubiquitin-protein ligase HECW2 (HECW2) of Homo sapiens (Human).